The primary structure comprises 1162 residues: Reticulon-4 (1162 aa).

Methionine 1 carries the N-acetylmethionine modification. The disordered stretch occupies residues 1–183; sequence MEDIDQSSLV…ALPAASEPVI (183 aa). Over 1–988 the chain is Cytoplasmic; it reads MEDIDQSSLV…LYWRDIKKTG (988 aa). 2 positions are modified to phosphoserine: serine 7 and serine 16. Low complexity predominate over residues 7-16; it reads SSLVSSSADS. Residues 31–54 are compositionally biased toward acidic residues; that stretch reads EPEDEEDEEDEEEEEDDEDLEELE. The segment covering 85-99 has biased composition (pro residues); that stretch reads PPAPRGPLPAAPPTA. Serine 105 bears the Phosphoserine mark. Residues 109 to 127 are compositionally biased toward low complexity; the sequence is SPAASAPSLPPAAAVLPSK. Phosphoserine is present on residues serine 145, serine 165, serine 167, serine 329, and serine 344. At threonine 348 the chain carries Phosphothreonine. Positions 408 to 422 are enriched in basic and acidic residues; it reads SLEQKGHGKDSESRN. The disordered stretch occupies residues 408-432; the sequence is SLEQKGHGKDSESRNENASFPRTPE. Residue serine 426 is modified to Phosphoserine. Threonine 430 carries the phosphothreonine modification. 5 positions are modified to phosphoserine: serine 489, serine 690, serine 727, serine 768, and serine 832. The tract at residues 711–730 is disordered; that stretch reads ELVDDSSPESEPVDLFSDDS. The span at 713 to 730 shows a compositional bias: acidic residues; sequence VDDSSPESEPVDLFSDDS. Threonine 834 carries the phosphothreonine modification. Phosphoserine occurs at positions 857 and 961. In terms of domain architecture, Reticulon spans 975–1162; that stretch reads VVDLLYWRDI…KIPGLKRKAE (188 aa). The chain crosses the membrane as a helical span at residues 989 to 1009; the sequence is VVFGASLFLLLSLTVFSIVSV. The Lumenal segment spans residues 1010 to 1078; it reads TAYIALALLS…VNSTIKELRR (69 aa). Position 1074 is an N6-acetyllysine (lysine 1074). A helical transmembrane segment spans residues 1079–1099; it reads LFLVDDLVDSLKFAVLMWVFT. The Cytoplasmic portion of the chain corresponds to 1100 to 1162; the sequence is YVGALFNGLT…KIPGLKRKAE (63 aa).

In terms of assembly, binds to RTN4R. Interacts with ATL1. Interacts with TMEM170A. Interacts with RTN4IP1. Interacts in trans with CNTNAP1. Interacts with REEP5. Interacts with GPR50. Interacts with synaptic plasticity regulator PANTS; the interaction results in enhanced RTN4-mediated inhibition of AMPA receptor clustering. As to quaternary structure, homodimer. Interacts with BAD/Bcl-xl and BCL2. Interact with RTN3. Interacts with NGBR. Interacts with SPTLC1. Interacts with GRAMD4. Interacts with CDH5. Interacts with BACE1 and BACE2. Interacts with REEP5. Interacts with RETREG3. In terms of assembly, interacts with BACE1 and BACE2. Interacts with TMEM33. Expressed in cardiomyocytes (at protein level). Highly expressed in brain but not deteceted in aorta, femoral and carotid arteries. Main isoform expressed in neurons. As to expression, expressed in cardiomyocytes (at protein level). Expressed in splenocytes, T-cells, B-cells, bone marrow derived dendritic cells and macrophages (at protein level). Expressed in neurons. Highly expressed in endothelial cells and vascular smooth muscle cells, including blood vessels and mesenteric arteries. Expressed in bronchial and alveolar epithelial cells as well as vascular endothelial cells of lungs. In terms of tissue distribution, expressed in B-cells, bone marrow dendritic cells and macrophages (at protein level). Expressed in cardiomyocytes. As to expression, expressed at very low levels in neurons.

It localises to the endoplasmic reticulum membrane. It is found in the cell membrane. Its subcellular location is the synapse. The protein resides in the cell junction. Functionally, required to induce the formation and stabilization of endoplasmic reticulum (ER) tubules. They regulate membrane morphogenesis in the ER by promoting tubular ER production. They influence nuclear envelope expansion, nuclear pore complex formation and proper localization of inner nuclear membrane proteins. However each isoform have specific functions mainly depending on their tissue expression specificities. Its function is as follows. Developmental neurite growth regulatory factor with a role as a negative regulator of axon-axon adhesion and growth, and as a facilitator of neurite branching. Regulates neurite fasciculation, branching and extension in the developing nervous system. Involved in down-regulation of growth, stabilization of wiring and restriction of plasticity in the adult CNS. Regulates the radial migration of cortical neurons via an RTN4R-LINGO1 containing receptor complex. Acts as a negative regulator of central nervous system angiogenesis. Inhibits spreading, migration and sprouting of primary brain microvascular endothelial cells (MVECs). Also induces the retraction of MVECs lamellipodia and filopodia in a ROCK pathway-dependent manner. In terms of biological role, mainly function in endothelial cells and vascular smooth muscle cells, is also involved in immune system regulation. Modulator of vascular remodeling, promotes the migration of endothelial cells but inhibits the migration of vascular smooth muscle cells. Regulates endothelial sphingolipid biosynthesis with direct effects on vascular function and blood pressure. Inhibits serine palmitoyltransferase, SPTLC1, the rate-limiting enzyme of the novo sphingolipid biosynthetic pathway, thereby controlling production of endothelial sphingosine-1-phosphate (S1P). Required to promote macrophage homing and functions such as cytokine/chemokine gene expression involved in angiogenesis, arteriogenesis and tissue repair. Mediates ICAM1 induced transendothelial migration of leukocytes such as monocytes and neutrophils and acute inflammation. Necessary for immune responses triggered by nucleic acid sensing TLRs, such as TLR9, is required for proper TLR9 location to endolysosomes. Also involved in immune response to LPS. Plays a role in liver regeneration through the modulation of hepatocytes proliferation. Reduces the anti-apoptotic activity of Bcl-xl and Bcl-2. This is likely consecutive to their change in subcellular location, from the mitochondria to the endoplasmic reticulum, after binding and sequestration. With isoform C, inhibits BACE1 activity and amyloid precursor protein processing. Regulates cardiomyocyte apoptosis upon hypoxic conditions. With isoform B, inhibits BACE1 activity and amyloid precursor protein processing. In Mus musculus (Mouse), this protein is Reticulon-4.